A 328-amino-acid chain; its full sequence is Acetaldehyde dehydrogenase 3 (328 aa).

Position 17–20 (17–20 (SGNI)) interacts with NAD(+). Cys-135 (acyl-thioester intermediate) is an active-site residue. NAD(+)-binding positions include 166-174 (SAGPGTRAN) and Asn-298.

The protein belongs to the acetaldehyde dehydrogenase family.

It carries out the reaction acetaldehyde + NAD(+) + CoA = acetyl-CoA + NADH + H(+). The chain is Acetaldehyde dehydrogenase 3 from Nocardia farcinica (strain IFM 10152).